Consider the following 418-residue polypeptide: Tyrosine--tRNA ligase 1 (418 aa).

Y34 lines the L-tyrosine pocket. The 'HIGH' region motif lies at 39 to 48; it reads PTADSLHIGH. Residues Y169 and Q173 each coordinate L-tyrosine. Residues 230-234 carry the 'KMSKS' region motif; that stretch reads KFGKT. Residue K233 coordinates ATP. Residues 352 to 418 enclose the S4 RNA-binding domain; the sequence is TVLIDLLVES…GKKKYFLIRY (67 aa).

Belongs to the class-I aminoacyl-tRNA synthetase family. TyrS type 1 subfamily. As to quaternary structure, homodimer.

It localises to the cytoplasm. The catalysed reaction is tRNA(Tyr) + L-tyrosine + ATP = L-tyrosyl-tRNA(Tyr) + AMP + diphosphate + H(+). Its function is as follows. Catalyzes the attachment of tyrosine to tRNA(Tyr) in a two-step reaction: tyrosine is first activated by ATP to form Tyr-AMP and then transferred to the acceptor end of tRNA(Tyr). In Bacillus cereus (strain ATCC 14579 / DSM 31 / CCUG 7414 / JCM 2152 / NBRC 15305 / NCIMB 9373 / NCTC 2599 / NRRL B-3711), this protein is Tyrosine--tRNA ligase 1.